Consider the following 373-residue polypeptide: GDP-mannose 4,6-dehydratase (373 aa).

NADP(+) contacts are provided by residues 9 to 14, 64 to 65, 86 to 90, and tyrosine 101; these read GVTGQD, DL, and LGAMS. Threonine 133 is an active-site residue. Catalysis depends on nucleophile residues glutamate 135 and tyrosine 157. NADP(+) is bound by residues lysine 161, histidine 187, and arginine 192.

It belongs to the NAD(P)-dependent epimerase/dehydratase family. GDP-mannose 4,6-dehydratase subfamily. NADP(+) serves as cofactor.

It catalyses the reaction GDP-alpha-D-mannose = GDP-4-dehydro-alpha-D-rhamnose + H2O. The protein operates within nucleotide-sugar biosynthesis; GDP-L-fucose biosynthesis via de novo pathway; GDP-L-fucose from GDP-alpha-D-mannose: step 1/2. In terms of biological role, catalyzes the conversion of GDP-D-mannose to GDP-4-dehydro-6-deoxy-D-mannose. The protein is GDP-mannose 4,6-dehydratase of Escherichia coli O157:H7.